A 111-amino-acid chain; its full sequence is Antirepressor protein CarS (111 aa).

In terms of assembly, monomer. Interacts with CarA and CarH.

Functionally, involved in carotenoid biosynthesis. Antagonizes the transcriptional repressor proteins CarA and CarH by preventing their binding to DNA. Can also dissociate preformed CarA-DNA complexes. Does not bind DNA. In Myxococcus xanthus, this protein is Antirepressor protein CarS (carS).